The chain runs to 122 residues: Small ribosomal subunit protein uS13 (122 aa).

The tract at residues 95 to 122 (QLPVRGQRTHTNARTRKGKAKPIAGKKK) is disordered.

The protein belongs to the universal ribosomal protein uS13 family. In terms of assembly, part of the 30S ribosomal subunit. Forms a loose heterodimer with protein S19. Forms two bridges to the 50S subunit in the 70S ribosome.

Located at the top of the head of the 30S subunit, it contacts several helices of the 16S rRNA. In the 70S ribosome it contacts the 23S rRNA (bridge B1a) and protein L5 of the 50S subunit (bridge B1b), connecting the 2 subunits; these bridges are implicated in subunit movement. Contacts the tRNAs in the A and P-sites. This is Small ribosomal subunit protein uS13 from Beijerinckia indica subsp. indica (strain ATCC 9039 / DSM 1715 / NCIMB 8712).